The primary structure comprises 63 residues: Small ribosomal subunit protein bS21 (63 aa).

This sequence belongs to the bacterial ribosomal protein bS21 family.

The protein is Small ribosomal subunit protein bS21 of Phocaeicola vulgatus (strain ATCC 8482 / DSM 1447 / JCM 5826 / CCUG 4940 / NBRC 14291 / NCTC 11154) (Bacteroides vulgatus).